A 595-amino-acid chain; its full sequence is MPRLWYSRYLAAARLRCRPLLIPEQPAVRLYQPLRRTVNTDANVHRPNEFVPLRKQLKEEAKRAKSQSRNGRGKKQVAANDGWELTVGIEIHAQLNSEAKLFSKAPTSTVAEPNTNVALFDLAFPGSQPEFQAATLLPALRAAIALNCDIQHTSRFDRKHYFYQDQPAGYQITQYYEPFARNGFIELHDYDGIAPEDGKSVRVDIKQIQLEQDTAKSHEHPPSAHFLDFNRVSHPLIEIITMPQIHSPATAAACVKKIQAILQATSAVTTGMELGGLRADVNVSVRRRDAPPGAGEYYGVQGLGQRTEIKNLSSFKAVEDAIIAERDRQIRVLESGGTVEVETRGWSIGSTETRKLRSKEGEVDYRYMPDPDLKPLVIDDGLVSALKDTLPALPDQLLSMLIGSSYGLSLEDAKPLVELDDGARLEYYQDVVDALLALRHGEDGDTANKLLGRAAANWVLHELGALHTKSDVTWHADRISAQTLAELIDQLLRKKITSSVAKQVLAMIFEGDQRPIHQLLEEENLLLRPLSRDEYIALANSLIEENPQMVAQIREKNQLGKIGWFVGQMMRLGEKGRVEAQRAEEIVRKLILGGQ.

Residues 1-72 constitute a mitochondrion transit peptide; the sequence is MPRLWYSRYL…RAKSQSRNGR (72 aa).

Belongs to the GatB/GatE family. GatB subfamily. Subunit of the heterotrimeric GatCAB amidotransferase (AdT) complex, composed of A, B and C subunits.

It is found in the mitochondrion. It catalyses the reaction L-glutamyl-tRNA(Gln) + L-glutamine + ATP + H2O = L-glutaminyl-tRNA(Gln) + L-glutamate + ADP + phosphate + H(+). Its function is as follows. Allows the formation of correctly charged Gln-tRNA(Gln) through the transamidation of misacylated Glu-tRNA(Gln) in the mitochondria. The reaction takes place in the presence of glutamine and ATP through an activated gamma-phospho-Glu-tRNA(Gln). In Talaromyces marneffei (strain ATCC 18224 / CBS 334.59 / QM 7333) (Penicillium marneffei), this protein is Glutamyl-tRNA(Gln) amidotransferase subunit B, mitochondrial.